A 240-amino-acid polypeptide reads, in one-letter code: Pyridoxine 5'-phosphate synthase (240 aa).

N7 provides a ligand contact to 3-amino-2-oxopropyl phosphate. 9-10 (DH) contributes to the 1-deoxy-D-xylulose 5-phosphate binding site. Residue R18 coordinates 3-amino-2-oxopropyl phosphate. Residue H43 is the Proton acceptor of the active site. The 1-deoxy-D-xylulose 5-phosphate site is built by R45 and H50. Catalysis depends on E70, which acts as the Proton acceptor. Residue T100 participates in 1-deoxy-D-xylulose 5-phosphate binding. H191 serves as the catalytic Proton donor. 3-amino-2-oxopropyl phosphate is bound by residues G192 and 213-214 (GH).

Belongs to the PNP synthase family. As to quaternary structure, homooctamer; tetramer of dimers.

The protein resides in the cytoplasm. It carries out the reaction 3-amino-2-oxopropyl phosphate + 1-deoxy-D-xylulose 5-phosphate = pyridoxine 5'-phosphate + phosphate + 2 H2O + H(+). Its pathway is cofactor biosynthesis; pyridoxine 5'-phosphate biosynthesis; pyridoxine 5'-phosphate from D-erythrose 4-phosphate: step 5/5. Its function is as follows. Catalyzes the complicated ring closure reaction between the two acyclic compounds 1-deoxy-D-xylulose-5-phosphate (DXP) and 3-amino-2-oxopropyl phosphate (1-amino-acetone-3-phosphate or AAP) to form pyridoxine 5'-phosphate (PNP) and inorganic phosphate. This chain is Pyridoxine 5'-phosphate synthase, found in Gloeothece citriformis (strain PCC 7424) (Cyanothece sp. (strain PCC 7424)).